Consider the following 786-residue polypeptide: Protein translocase subunit SecA 1 (786 aa).

Residues Gln85, Gly103–Thr107, and Asp491 contribute to the ATP site.

This sequence belongs to the SecA family. Monomer and homodimer. Part of the essential Sec protein translocation apparatus which comprises SecA, SecYEG and auxiliary proteins SecDF. Other proteins may also be involved.

The protein localises to the cell membrane. It is found in the cytoplasm. The enzyme catalyses ATP + H2O + cellular proteinSide 1 = ADP + phosphate + cellular proteinSide 2.. Functionally, part of the Sec protein translocase complex. Interacts with the SecYEG preprotein conducting channel. Has a central role in coupling the hydrolysis of ATP to the transfer of proteins into and across the cell membrane, serving as an ATP-driven molecular motor driving the stepwise translocation of polypeptide chains across the membrane. The polypeptide is Protein translocase subunit SecA 1 (Pediococcus pentosaceus (strain ATCC 25745 / CCUG 21536 / LMG 10740 / 183-1w)).